A 429-amino-acid polypeptide reads, in one-letter code: Enolase (429 aa).

Gln163 serves as a coordination point for (2R)-2-phosphoglycerate. Glu205 functions as the Proton donor in the catalytic mechanism. Residues Asp242, Glu287, and Asp314 each contribute to the Mg(2+) site. The (2R)-2-phosphoglycerate site is built by Lys339, Arg368, Ser369, and Lys390. The active-site Proton acceptor is the Lys339.

It belongs to the enolase family. Mg(2+) serves as cofactor.

It is found in the cytoplasm. Its subcellular location is the secreted. It localises to the cell surface. The catalysed reaction is (2R)-2-phosphoglycerate = phosphoenolpyruvate + H2O. It functions in the pathway carbohydrate degradation; glycolysis; pyruvate from D-glyceraldehyde 3-phosphate: step 4/5. Catalyzes the reversible conversion of 2-phosphoglycerate (2-PG) into phosphoenolpyruvate (PEP). It is essential for the degradation of carbohydrates via glycolysis. The polypeptide is Enolase (Anaeromyxobacter sp. (strain Fw109-5)).